A 369-amino-acid polypeptide reads, in one-letter code: 4beta-methylsterol monooxygenase (369 aa).

The 107-residue stretch at 29–135 (WYVVEIDGRL…VKAQWGLIWL (107 aa)) folds into the Rieske domain. The [2Fe-2S] cluster site is built by cysteine 70, histidine 72, cysteine 89, and histidine 92.

Requires [2Fe-2S] cluster as cofactor.

It carries out the reaction a 3beta-hydroxy-4,4-dimethylsteroid + 3 NADH + 3 O2 + 2 H(+) = a 3beta-hydroxy-4alpha-methylsteroid-4beta-carboxylate + 3 NAD(+) + 4 H2O. It catalyses the reaction 4,4-dimethyl-5alpha-cholesta-8,24-dien-3beta-ol + 3 NADH + 3 O2 + 2 H(+) = 4beta-carboxy-4alpha-methyl-5alpha-cholesta-8,24-dien-3beta-ol + 3 NAD(+) + 4 H2O. The enzyme catalyses a 3beta-hydroxy-4,4-dimethylsteroid + NADH + O2 + H(+) = a 3beta-hydroxy-4beta-hydroxymethyl-4alpha-methylsteroid + NAD(+) + H2O. The catalysed reaction is a 3beta-hydroxy-4beta-hydroxymethyl-4alpha-methylsteroid + NADH + O2 + H(+) = a 3beta-hydroxy-4beta-formyl-4alpha-methylsteroid + NAD(+) + 2 H2O. It carries out the reaction a 3beta-hydroxy-4beta-formyl-4alpha-methylsteroid + NADH + O2 = a 3beta-hydroxy-4alpha-methylsteroid-4beta-carboxylate + NAD(+) + H2O. It catalyses the reaction 4,4-dimethyl-5alpha-cholesta-8,24-dien-3beta-ol + NADH + O2 + H(+) = 4beta-hydroxymethyl-4alpha-methylzymosterol + NAD(+) + H2O. The enzyme catalyses 4beta-hydroxymethyl-4alpha-methylzymosterol + NADH + O2 + H(+) = 4beta-formylmethyl-4alpha-methyl-5alpha-cholesta-8,24-dien-3beta-ol + NAD(+) + 2 H2O. The catalysed reaction is 4beta-formylmethyl-4alpha-methyl-5alpha-cholesta-8,24-dien-3beta-ol + NADH + O2 = 4beta-carboxy-4alpha-methyl-5alpha-cholesta-8,24-dien-3beta-ol + NAD(+) + H2O. It functions in the pathway steroid biosynthesis; sterol biosynthesis. Its function is as follows. Participates in the biosynthesis of bacterial sterols. Together with SdmB, removes one methyl group from the C-4 position of 4,4-dimethylated steroid molecules. SdmA oxidizes the sterol 4beta-methyl group into first a hydroxyl, then an aldehyde and finally a carboxylic acid group. In Methylococcus capsulatus (strain ATCC 33009 / NCIMB 11132 / Bath), this protein is 4beta-methylsterol monooxygenase.